A 254-amino-acid chain; its full sequence is GPI alpha-1,4-mannosyltransferase I, stabilizing subunit (254 aa).

A signal peptide spans 1–22; it reads MAAGAVAWLLLWAAWLVGRLAA. At 23-226 the chain is on the lumenal side; the sequence is DFSDAPFSAG…PVGLTIHTSL (204 aa). Residue Asn-211 is glycosylated (N-linked (GlcNAc...) asparagine). The helical transmembrane segment at 227-247 threads the bilayer; the sequence is VCSVTLLITILCSTLILLAVF. At 248–254 the chain is on the cytoplasmic side; sequence KYGHFSL.

Belongs to the PIGX family. As to quaternary structure, part of the glycosylphosphatidylinositol-mannosyltransferase I complex that is composed of PIGM and PIGX. Interacts with PIGM; PIGX stabilizes PIGM.

It is found in the endoplasmic reticulum membrane. Its pathway is glycolipid biosynthesis; glycosylphosphatidylinositol-anchor biosynthesis. Stabilizing subunit of the glycosylphosphatidylinositol-mannosyltransferase I complex which catalyzes the transfer of the first mannose, via an alpha-1,4 bond from a dolichol-phosphate-mannose (Dol-P-Man) to the glucosaminyl acyl phosphatidylinositol (GlcN-(acyl)PI) intermediate to generate alpha-D-Man-(1-&gt;4)-alpha-D-GlcN-(1-&gt;6)-(1-radyl,2-acyl-sn-glycero-3-phospho)-2-acyl-inositol and participates in the sixth step of the glycosylphosphatidylinositol-anchor biosynthesis. Probably acts by stabilizing the mannosyltransferase PIGM. The protein is GPI alpha-1,4-mannosyltransferase I, stabilizing subunit of Mus musculus (Mouse).